The primary structure comprises 202 residues: Imidazoleglycerol-phosphate dehydratase (202 aa).

Belongs to the imidazoleglycerol-phosphate dehydratase family.

Its subcellular location is the cytoplasm. It catalyses the reaction D-erythro-1-(imidazol-4-yl)glycerol 3-phosphate = 3-(imidazol-4-yl)-2-oxopropyl phosphate + H2O. It functions in the pathway amino-acid biosynthesis; L-histidine biosynthesis; L-histidine from 5-phospho-alpha-D-ribose 1-diphosphate: step 6/9. In Rhizobium etli (strain CIAT 652), this protein is Imidazoleglycerol-phosphate dehydratase.